Here is a 509-residue protein sequence, read N- to C-terminus: Ribonuclease Y (509 aa).

A helical membrane pass occupies residues 3–23; that stretch reads IIFSSIFAGFILGFLIRVFLG. The region spanning 197–257 is the KH domain; the sequence is TVASVELPND…IRKELAKRTL (61 aa). Positions 323-418 constitute an HD domain; that stretch reads VLSHSKETAI…VQIADAISAS (96 aa).

Belongs to the RNase Y family.

Its subcellular location is the cell membrane. Its function is as follows. Endoribonuclease that initiates mRNA decay. This chain is Ribonuclease Y, found in Borreliella afzelii (strain PKo) (Borrelia afzelii).